The sequence spans 208 residues: NAD(P)H-quinone oxidoreductase subunit M, chloroplastic (208 aa).

Residues 1 to 21 (MAATSSYTACTKFSMLGWIGG) constitute a chloroplast transit peptide. A compositionally biased stretch (low complexity) spans 37-49 (QQAEVEESQQVNA). Positions 37–70 (QQAEVEESQQVNAQEEEQEKMKQQGKQKLPRPVE) are disordered.

Belongs to the NDH complex subunit M family. In terms of assembly, part of the chloroplast NDH complex, composed of a mixture of chloroplast and nucleus encoded subunits. Component of the NDH subcomplex A, at least composed of ndhH, ndhI, ndhJ, ndhK, ndhL, ndhM, ndhN and ndhO.

The protein resides in the plastid. Its subcellular location is the chloroplast thylakoid membrane. The enzyme catalyses a plastoquinone + NADH + (n+1) H(+)(in) = a plastoquinol + NAD(+) + n H(+)(out). The catalysed reaction is a plastoquinone + NADPH + (n+1) H(+)(in) = a plastoquinol + NADP(+) + n H(+)(out). Functionally, NDH shuttles electrons from NAD(P)H:plastoquinone, via FMN and iron-sulfur (Fe-S) centers, to quinones in the photosynthetic chain and possibly in a chloroplast respiratory chain. The immediate electron acceptor for the enzyme in this species is believed to be plastoquinone. Couples the redox reaction to proton translocation, and thus conserves the redox energy in a proton gradient. The chain is NAD(P)H-quinone oxidoreductase subunit M, chloroplastic from Vitis vinifera (Grape).